The primary structure comprises 251 residues: Isopentenyl-diphosphate delta-isomerase (251 aa).

Lys49 serves as a coordination point for substrate. Mg(2+)-binding residues include His53 and His66. One can recognise a Nudix hydrolase domain in the interval 64-212; the sequence is LLHRAFSVFL…SNSFTPWFKL (149 aa). 2 residues coordinate substrate: Arg86 and Lys90. Cys102 is a catalytic residue. Residue Ser103 coordinates substrate. Positions 162 and 164 each coordinate Mg(2+). The active site involves Glu164.

The protein belongs to the IPP isomerase type 1 family. It depends on Mg(2+) as a cofactor.

Its subcellular location is the cytoplasm. The catalysed reaction is isopentenyl diphosphate = dimethylallyl diphosphate. Its pathway is isoprenoid biosynthesis; dimethylallyl diphosphate biosynthesis; dimethylallyl diphosphate from isopentenyl diphosphate: step 1/1. Isopentenyl-diphosphate delta-isomerase; part of the second module of ergosterol biosynthesis pathway that includes the middle steps of the pathway. The second module is carried out in the vacuole and involves the formation of farnesyl diphosphate, which is also an important intermediate in the biosynthesis of ubiquinone, dolichol, heme and prenylated proteins. Activity by the mevalonate kinase first converts mevalonate into 5-phosphomevalonate. 5-phosphomevalonate is then further converted to 5-diphosphomevalonate by the phosphomevalonate kinase. The diphosphomevalonate decarboxylase then produces isopentenyl diphosphate. The isopentenyl-diphosphate delta-isomerase then catalyzes the 1,3-allylic rearrangement of the homoallylic substrate isopentenyl (IPP) to its highly electrophilic allylic isomer, dimethylallyl diphosphate (DMAPP). Finally the farnesyl diphosphate synthase catalyzes the sequential condensation of isopentenyl pyrophosphate with dimethylallyl pyrophosphate, and then with the resultant geranylpyrophosphate to the ultimate product farnesyl pyrophosphate. The sequence is that of Isopentenyl-diphosphate delta-isomerase from Phaffia rhodozyma (Yeast).